Reading from the N-terminus, the 450-residue chain is Protein tweety homolog 1 (450 aa).

The Extracellular portion of the chain corresponds to Met1–Ala43. A helical transmembrane segment spans residues Leu44–Val64. Residues Tyr65–Gly88 lie on the Cytoplasmic side of the membrane. A helical transmembrane segment spans residues Cys89 to Phe109. The Extracellular portion of the chain corresponds to Tyr110 to Trp214. Residue Asn130 is glycosylated (N-linked (GlcNAc...) asparagine). A helical transmembrane segment spans residues Leu215 to Leu235. The Cytoplasmic portion of the chain corresponds to Ala236–Lys240. A helical transmembrane segment spans residues Trp241–Met261. Over Gly262–Glu390 the chain is Extracellular. Intrachain disulfides connect Cys275–Cys385 and Cys303–Cys370. Residues Asn284 and Asn355 are each glycosylated (N-linked (GlcNAc...) asparagine). Residues Gly391–Cys411 form a helical membrane-spanning segment. The Cytoplasmic portion of the chain corresponds to Ser412–Ile450. Positions Asp428–Ile450 are disordered. Ser440 is modified (phosphoserine).

This sequence belongs to the tweety family. In terms of assembly, homotetramer; disulfide-linked. Homodimer. Post-translationally, N-glycosylated. Contains high-mannose, hybrid and complex oligosaccharides. As to expression, expressed in the astrocytes (at protein level). Restricted mainly to neural tissues. Strongly expressed in brain and eye.

It localises to the cell membrane. It catalyses the reaction chloride(in) = chloride(out). The catalysed reaction is L-glutamate(out) = L-glutamate(in). With respect to regulation, inhibited by (4-[(2-butyl-6,7-dichloro-2- cyclopentyl-2,3-dihydro-1-oxo-1H-inden-5-yl)oxy]butanoic acid). Its function is as follows. Calcium-independent, swelling-dependent volume-regulated anion channel (VRAC-swell) which plays a pivotal role in the process of regulatory volume decrease (RVD) in the brain through the efflux of anions like chloride and organic osmolytes like glutamate. The chain is Protein tweety homolog 1 (Ttyh1) from Mus musculus (Mouse).